Here is a 269-residue protein sequence, read N- to C-terminus: Imidazole glycerol phosphate synthase subunit HisF (269 aa).

Active-site residues include Asp23 and Asp142.

This sequence belongs to the HisA/HisF family. In terms of assembly, heterodimer of HisH and HisF.

The protein localises to the cytoplasm. The catalysed reaction is 5-[(5-phospho-1-deoxy-D-ribulos-1-ylimino)methylamino]-1-(5-phospho-beta-D-ribosyl)imidazole-4-carboxamide + L-glutamine = D-erythro-1-(imidazol-4-yl)glycerol 3-phosphate + 5-amino-1-(5-phospho-beta-D-ribosyl)imidazole-4-carboxamide + L-glutamate + H(+). It participates in amino-acid biosynthesis; L-histidine biosynthesis; L-histidine from 5-phospho-alpha-D-ribose 1-diphosphate: step 5/9. In terms of biological role, IGPS catalyzes the conversion of PRFAR and glutamine to IGP, AICAR and glutamate. The HisF subunit catalyzes the cyclization activity that produces IGP and AICAR from PRFAR using the ammonia provided by the HisH subunit. The sequence is that of Imidazole glycerol phosphate synthase subunit HisF from Bordetella parapertussis (strain 12822 / ATCC BAA-587 / NCTC 13253).